The primary structure comprises 175 residues: NADH-quinone oxidoreductase subunit I (175 aa).

4Fe-4S ferredoxin-type domains are found at residues 64-93 (KRDEQGRENCTACGLCAVSCPAEAITIIAD) and 110-139 (SLYEINMLRCIFCGLCEEACPKDAVYLTEE). [4Fe-4S] cluster-binding residues include cysteine 73, cysteine 76, cysteine 79, cysteine 83, cysteine 119, cysteine 122, cysteine 125, and cysteine 129.

The protein belongs to the complex I 23 kDa subunit family. In terms of assembly, NDH-1 is composed of 14 different subunits. Subunits NuoA, H, J, K, L, M, N constitute the membrane sector of the complex. It depends on [4Fe-4S] cluster as a cofactor.

The protein localises to the cell inner membrane. The enzyme catalyses a quinone + NADH + 5 H(+)(in) = a quinol + NAD(+) + 4 H(+)(out). Its function is as follows. NDH-1 shuttles electrons from NADH, via FMN and iron-sulfur (Fe-S) centers, to quinones in the respiratory chain. The immediate electron acceptor for the enzyme in this species is believed to be ubiquinone. Couples the redox reaction to proton translocation (for every two electrons transferred, four hydrogen ions are translocated across the cytoplasmic membrane), and thus conserves the redox energy in a proton gradient. This Cytophaga hutchinsonii (strain ATCC 33406 / DSM 1761 / CIP 103989 / NBRC 15051 / NCIMB 9469 / D465) protein is NADH-quinone oxidoreductase subunit I.